Consider the following 564-residue polypeptide: Interactor of constitutive active ROPs 3 (564 aa).

2 disordered regions span residues 1–73 (MQTQ…SRIT) and 88–135 (KAKD…SALE). Polar residues predominate over residues 33–44 (ESSSSPISATNR). 2 stretches are compositionally biased toward basic and acidic residues: residues 63–73 (VSEKKRPSRIT) and 98–123 (TSKKQAEQEAEESRKQLQEVSSKLEE). 2 coiled-coil regions span residues 70–133 (SRIT…ETSA) and 231–514 (AETE…AATA). At S533 the chain carries Phosphoserine.

This sequence belongs to the ICR family. In terms of assembly, interacts with ARAC11 in vitro. Expressed in flowers.

Functionally, acts as a scaffold, mediating interaction of ROPs with different proteins. This is Interactor of constitutive active ROPs 3 (ICR3) from Arabidopsis thaliana (Mouse-ear cress).